Here is a 515-residue protein sequence, read N- to C-terminus: Sphingolipid 10-desaturase (515 aa).

The helical transmembrane segment at 3 to 23 threads the bilayer; the sequence is AVWALLWALQLGTLVGCALVL. The region spanning 46-113 is the Cytochrome b5 heme-binding domain; it reads AKPISDQKAA…DISFVFRVMH (68 aa). Residues His-90 and His-113 each contribute to the heme site. A helical membrane pass occupies residues 198–218; the sequence is TWLLWNTAVLISIIALSVISM. The Histidine box-1 motif lies at 245 to 249; it reads HDAEH. Residues 258 to 278 form a helical membrane-spanning segment; it reads LNDILGWIYGTVFLGVNGAWW. The Histidine box-2 motif lies at 281 to 286; sequence EHREHH. 3 helical membrane passes run 322–342, 359–379, and 382–402; these read IIHFLTNFQHILFLPIIFIVG, PWTILGNVCHILLHYAILSQT, and PIPVYIIGSLWQAILSLQLLG. Positions 447-451 match the Histidine box-3 motif; that stretch reads HYSHH.

Belongs to the fatty acid desaturase type 1 family. The cofactor is Fe(2+).

It localises to the membrane. It carries out the reaction a (4E,8E)-4-sphinga-4,8-dienine ceramide + 2 Fe(II)-[cytochrome b5] + O2 + 2 H(+) = an N-acyl-(4E,8E,10E)-sphingatrienine + 2 Fe(III)-[cytochrome b5] + 2 H2O. Its pathway is lipid metabolism; sphingolipid metabolism. In terms of biological role, fatty acid desaturase that catalyzes the introduction of the third double bond at the Delta(10) position in d18:3Delta4,8,10 triunsaturated sphingolipid long fatty acid chains. The cytochrome b5 domain probably acts as the direct electron donor to the active site of the desaturase. The sequence is that of Sphingolipid 10-desaturase from Thalassiosira pseudonana (Marine diatom).